The sequence spans 373 residues: Thyroid hormone receptor beta-A (373 aa).

The tract at residues 1–18 is modulating; it reads MPSSMSGYIPSYLDKDEL. 2 NR C4-type zinc fingers span residues 19-39 and 57-81; these read CVVC…CEGC and CKYE…FKKC. The segment at residues 19–93 is a DNA-binding region (nuclear receptor); the sequence is CVVCGDKATG…VGMATDLVLD (75 aa). An NR LBD domain is found at 129-373; that stretch reads EEWELIQVVT…PPLFLEVFED (245 aa).

Belongs to the nuclear hormone receptor family. NR1 subfamily.

Its subcellular location is the nucleus. In terms of biological role, high affinity receptor for triiodothyronine (T3). In Xenopus laevis (African clawed frog), this protein is Thyroid hormone receptor beta-A (thrb-a).